The following is a 400-amino-acid chain: CCA-adding enzyme (400 aa).

The ATP site is built by Gly28 and Arg31. CTP-binding residues include Gly28 and Arg31. Residues Asp41 and Asp43 each contribute to the Mg(2+) site. Residues Arg112, Asp155, Arg158, Arg161, and Arg164 each coordinate ATP. Residues Arg112, Asp155, Arg158, Arg161, and Arg164 each coordinate CTP.

This sequence belongs to the tRNA nucleotidyltransferase/poly(A) polymerase family. Bacterial CCA-adding enzyme type 3 subfamily. As to quaternary structure, homodimer. Requires Mg(2+) as cofactor.

It catalyses the reaction a tRNA precursor + 2 CTP + ATP = a tRNA with a 3' CCA end + 3 diphosphate. The enzyme catalyses a tRNA with a 3' CCA end + 2 CTP + ATP = a tRNA with a 3' CCACCA end + 3 diphosphate. Its function is as follows. Catalyzes the addition and repair of the essential 3'-terminal CCA sequence in tRNAs without using a nucleic acid template. Adds these three nucleotides in the order of C, C, and A to the tRNA nucleotide-73, using CTP and ATP as substrates and producing inorganic pyrophosphate. tRNA 3'-terminal CCA addition is required both for tRNA processing and repair. Also involved in tRNA surveillance by mediating tandem CCA addition to generate a CCACCA at the 3' terminus of unstable tRNAs. While stable tRNAs receive only 3'-terminal CCA, unstable tRNAs are marked with CCACCA and rapidly degraded. In Oceanobacillus iheyensis (strain DSM 14371 / CIP 107618 / JCM 11309 / KCTC 3954 / HTE831), this protein is CCA-adding enzyme.